Here is a 741-residue protein sequence, read N- to C-terminus: Lamin-B receptor (741 aa).

A disordered region spans residues 29 to 126 (RLRRPRRTED…TGSGSGSSLP (98 aa)). 2 stretches are compositionally biased toward low complexity: residues 57 to 84 (TRRT…RTRA) and 109 to 126 (PRSS…SSLP). Ser-111 is modified (phosphoserine). Residue Thr-135 is modified to Phosphothreonine. Ser-144 bears the Phosphoserine mark. The span at 160–184 (TNTSSGAPNKAFNTSSVNSGNSFSR) shows a compositional bias: polar residues. A disordered region spans residues 160–194 (TNTSSGAPNKAFNTSSVNSGNSFSRTTTSSTTTTT). A compositionally biased stretch (low complexity) spans 185-194 (TTTSSTTTTT). Residues Ser-223 and Ser-225 each carry the phosphoserine modification. The span at 231–240 (LAGTPVTNTE) shows a compositional bias: polar residues. The interval 231–277 (LAGTPVTNTEEGSRYSRSVSRSVYDDEKSSKRSYSTGEEDIDEEDEL) is disordered. 2 positions are modified to phosphothreonine: Thr-234 and Thr-237. Ser-243, Ser-246, Ser-248, Ser-250, and Ser-263 each carry phosphoserine. Phosphothreonine is present on Thr-266. The segment covering 267 to 277 (GEEDIDEEDEL) has biased composition (acidic residues). Position 284 is a phosphoserine (Ser-284). Thr-288 carries the post-translational modification Phosphothreonine. Ser-291 bears the Phosphoserine mark. Phosphothreonine is present on Thr-293. At Ser-298 the chain carries Phosphoserine. 8 consecutive transmembrane segments (helical) span residues 308–328 (FGGW…VYYL), 363–383 (VVGA…LLPG), 402–422 (LTLL…VTFV), 429–449 (FCIF…WLVD), 497–517 (LSLV…LVWP), 543–563 (PATL…IIFE), 577–599 (YGCL…TKYF), and 604–624 (VPIS…LGLL). Phosphoserine is present on residues Ser-640 and Ser-642. Residues 687–707 (MALRPAWPPVLGLSLIILLLL) form a helical membrane-spanning segment.

The protein belongs to the ERG4/ERG24 family. Interacts directly with LAM.

The protein localises to the nucleus inner membrane. In terms of biological role, anchors the lamina and the heterochromatin to the inner nuclear membrane. The sequence is that of Lamin-B receptor from Drosophila melanogaster (Fruit fly).